The sequence spans 353 residues: Alanine racemase (353 aa).

Residue Lys-34 is the Proton acceptor; specific for D-alanine of the active site. N6-(pyridoxal phosphate)lysine is present on Lys-34. Arg-128 contributes to the substrate binding site. Residue Tyr-251 is the Proton acceptor; specific for L-alanine of the active site. Residue Met-299 coordinates substrate.

The protein belongs to the alanine racemase family. Requires pyridoxal 5'-phosphate as cofactor.

The catalysed reaction is L-alanine = D-alanine. It participates in amino-acid biosynthesis; D-alanine biosynthesis; D-alanine from L-alanine: step 1/1. In terms of biological role, catalyzes the interconversion of L-alanine and D-alanine. May also act on other amino acids. This Alcanivorax borkumensis (strain ATCC 700651 / DSM 11573 / NCIMB 13689 / SK2) protein is Alanine racemase (alr).